A 266-amino-acid polypeptide reads, in one-letter code: Glucosamine-6-phosphate deaminase 1 (266 aa).

Residue aspartate 67 is the Proton acceptor; for enolization step of the active site. Asparagine 136 functions as the For ring-opening step in the catalytic mechanism. Histidine 138 serves as the catalytic Proton acceptor; for ring-opening step. Residue glutamate 143 is the For ring-opening step of the active site.

The protein belongs to the glucosamine/galactosamine-6-phosphate isomerase family. As to quaternary structure, homohexamer.

Its subcellular location is the cytoplasm. The enzyme catalyses alpha-D-glucosamine 6-phosphate + H2O = beta-D-fructose 6-phosphate + NH4(+). Functionally, catalyzes the reversible conversion of alpha-D-glucosamine 6-phosphate (GlcN-6P) into beta-D-fructose 6-phosphate (Fru-6P) and ammonium ion, a regulatory reaction step in de novo uridine diphosphate-N-acetyl-alpha-D-glucosamine (UDP-GlcNAc) biosynthesis via hexosamine pathway. The polypeptide is Glucosamine-6-phosphate deaminase 1 (GPI1) (Giardia intestinalis (Giardia lamblia)).